A 126-amino-acid chain; its full sequence is Non-specific lipid-transfer protein 13 (126 aa).

The signal sequence occupies residues Met1–Ser20. Intrachain disulfides connect Cys36-Cys85, Cys46-Cys61, Cys62-Cys109, and Cys83-Cys123.

It belongs to the plant LTP family.

In terms of biological role, plant non-specific lipid-transfer proteins transfer phospholipids as well as galactolipids across membranes. May play a role in wax or cutin deposition in the cell walls of expanding epidermal cells and certain secretory tissues. The protein is Non-specific lipid-transfer protein 13 (LTP13) of Arabidopsis thaliana (Mouse-ear cress).